Here is a 91-residue protein sequence, read N- to C-terminus: MGSKQSAPPKPLQLPQPRVSLLREAKPSLYGRYNCKCCWFQDKNLVECSDHYLCLKCISSMLKRGKNCEICGKAIPTYIEVGITPTAPQLN.

Gly2 carries N-myristoyl glycine; by host lipidation. Residues 35–71 (CKCCWFQDKNLVECSDHYLCLKCISSMLKRGKNCEIC) form an RING-type; atypical zinc finger. The PTAP/PSAP motif signature appears at 85–88 (PTAP).

It belongs to the arenaviridae Z protein family. Interacts with protein NP; this interaction probably directs the encapsidated genome to budding sites. Interacts (via RING domain) with polymerase L; this interaction inhibits viral transcription and replication, Z partially blocks the product exit tunnel for the releasing nascent RNA product. Interacts with the glycoprotein complex; this interaction plays a role in virion budding. Interacts with host eIF4E; this interaction results in eIF4E reduced affinity for its substrate, the 5'-m7 G cap structure. Interacts (via late-budding domain) with host TSG101; this interaction is essential for budding and release of viral particles. Interacts with host RPLP0; this interaction may serve to load ribosome-like particles inside the virion. Interacts with host PML; this interaction induces PML bodies redistribution in the cytoplasm upon viral infection. Myristoylation is required for the role of RING finger protein Z in assembly and budding.

It is found in the virion. The protein localises to the host cytoplasm. It localises to the host perinuclear region. The protein resides in the host cell membrane. In terms of biological role, plays a crucial role in virion assembly and budding. Expressed late in the virus life cycle, it acts as an inhibitor of viral transcription and RNA synthesis by interacting with the viral polymerase L. Presumably recruits the NP encapsidated genome to cellular membranes at budding sites via direct interaction with NP. Plays critical roles in the final steps of viral release by interacting with host TSG101, a member of the vacuolar protein-sorting pathway and using other cellular host proteins involved in vesicle formation pathway. The budding of the virus progeny occurs after association of protein Z with the viral glycoprotein complex SSP-GP1-GP2 at the cell periphery, step that requires myristoylation of protein Z. Also selectively represses protein production by associating with host eIF4E. In cell-based minigenome assay, has an inhibitory effect on the ribonucleoprotein machinery (vRNP), which is responsible for the replication and transcription of the viral genome. In Latino mammarenavirus (isolate Rat/Bolivia/MARU 1924/1965) (LATV), this protein is RING finger protein Z.